A 791-amino-acid polypeptide reads, in one-letter code: ATP-dependent 6-phosphofructokinase, platelet type (791 aa).

Methionine 1 carries the N-acetylmethionine modification. Residues methionine 1 to isoleucine 399 are N-terminal catalytic PFK domain 1. Serine 6 is modified (phosphoserine). Serine 12 bears the Phosphoserine; by PKA mark. At serine 21 the chain carries Phosphoserine. Residues glycine 34, arginine 97 to serine 98, and glycine 127 to serine 130 each bind ATP. Serine 142 carries the post-translational modification Phosphoserine. Substrate-binding positions include serine 173–aspartate 175, arginine 210, methionine 217–arginine 219, glutamate 273, arginine 301, and histidine 307–arginine 310. Aspartate 175 acts as the Proton acceptor in catalysis. A Phosphoserine modification is found at serine 386. Lysine 395 is modified (N6-acetyllysine). The tract at residues lysine 400 to cysteine 411 is interdomain linker. The C-terminal regulatory PFK domain 2 stretch occupies residues asparagine 412–isoleucine 791. Arginine 481 provides a ligand contact to beta-D-fructose 2,6-bisphosphate. Lysine 486 bears the N6-acetyllysine mark. Beta-D-fructose 2,6-bisphosphate contacts are provided by residues threonine 538 to asparagine 542, arginine 576, methionine 583 to glycine 585, and glutamate 639. Serine 540 carries O-linked (GlcNAc) serine glycosylation. Tyrosine 651 bears the Phosphotyrosine mark. Beta-D-fructose 2,6-bisphosphate is bound by residues arginine 665 and histidine 671–glutamine 674. Position 688 is an N6-acetyllysine (lysine 688). Position 744 (arginine 744) interacts with beta-D-fructose 2,6-bisphosphate.

The protein belongs to the phosphofructokinase type A (PFKA) family. ATP-dependent PFK group I subfamily. Eukaryotic two domain clade 'E' sub-subfamily. Homo- and heterotetramers. Phosphofructokinase (PFK) enzyme functions as a tetramer composed of different combinations of 3 types of subunits, called PFKM (M), PFKL (L) and PFKP (P). The composition of the PFK tetramer differs according to the tissue type it is present in. The kinetic and regulatory properties of the tetrameric enzyme are dependent on the subunit composition, hence can vary across tissues. Interacts with ATG4B; promoting phosphorylation of ATG4B. The cofactor is Mg(2+). Post-translationally, glcNAcylation decreases enzyme activity. Phosphorylation at Ser-386 promotes interaction with ATG4B.

The protein localises to the cytoplasm. It catalyses the reaction beta-D-fructose 6-phosphate + ATP = beta-D-fructose 1,6-bisphosphate + ADP + H(+). The protein operates within carbohydrate degradation; glycolysis; D-glyceraldehyde 3-phosphate and glycerone phosphate from D-glucose: step 3/4. Allosterically activated by ADP, AMP, or fructose 2,6-bisphosphate, and allosterically inhibited by ATP or citrate. Its function is as follows. Catalyzes the phosphorylation of D-fructose 6-phosphate to fructose 1,6-bisphosphate by ATP, the first committing step of glycolysis. This is ATP-dependent 6-phosphofructokinase, platelet type (PFKP) from Oryctolagus cuniculus (Rabbit).